The following is a 371-amino-acid chain: Probable tRNA sulfurtransferase (371 aa).

Positions 54-156 constitute a THUMP domain; sequence NANIEALSEV…NEMTYFYHKV (103 aa). Residues 174-175, 199-200, Lys254, Gly276, and Gln285 each bind ATP; these read LF and NF.

It belongs to the ThiI family.

Its subcellular location is the cytoplasm. The catalysed reaction is [ThiI sulfur-carrier protein]-S-sulfanyl-L-cysteine + a uridine in tRNA + 2 reduced [2Fe-2S]-[ferredoxin] + ATP + H(+) = [ThiI sulfur-carrier protein]-L-cysteine + a 4-thiouridine in tRNA + 2 oxidized [2Fe-2S]-[ferredoxin] + AMP + diphosphate. It carries out the reaction [ThiS sulfur-carrier protein]-C-terminal Gly-Gly-AMP + S-sulfanyl-L-cysteinyl-[cysteine desulfurase] + AH2 = [ThiS sulfur-carrier protein]-C-terminal-Gly-aminoethanethioate + L-cysteinyl-[cysteine desulfurase] + A + AMP + 2 H(+). The protein operates within cofactor biosynthesis; thiamine diphosphate biosynthesis. Its function is as follows. Catalyzes the ATP-dependent transfer of a sulfur to tRNA to produce 4-thiouridine in position 8 of tRNAs, which functions as a near-UV photosensor. Also catalyzes the transfer of sulfur to the sulfur carrier protein ThiS, forming ThiS-thiocarboxylate. This is a step in the synthesis of thiazole, in the thiamine biosynthesis pathway. The sulfur is donated as persulfide by IscS. The chain is Probable tRNA sulfurtransferase from Saccharolobus solfataricus (strain ATCC 35092 / DSM 1617 / JCM 11322 / P2) (Sulfolobus solfataricus).